The following is a 155-amino-acid chain: VEHLTEDEKSQFRAAFDIFVADAKDGTISSKELGKVMKMLGQNPTEKDLQEMIEEVDIDGSGTIDFEEFCLMMYRQMQAQEEAKIPEREEKELSEAFRLFDLDGDGIGDELKAALDGTGENVETWEVDEMMADGDKNHDSQIDYEEWVTMMKFVQ.

Valine 1 bears the N-acetylvaline mark. 4 EF-hand domains span residues 7 to 43 (DEKS…LGQN), 44 to 79 (PTEK…QMQA), 88 to 121 (REEK…TGEN), and 122 to 155 (VETW…KFVQ). Residues aspartate 57, aspartate 59, serine 61, threonine 63, and glutamate 68 each coordinate Ca(2+). Ca(2+) contacts are provided by aspartate 135, asparagine 137, aspartate 139, glutamine 141, and glutamate 146.

The protein belongs to the troponin C family.

Troponin is the central regulatory protein of muscle contraction. Tn consists of three components: Tn-I which is the inhibitor of actomyosin ATPase, Tn-T which contains the binding site for tropomyosin and Tn-C. The binding of calcium to Tn-C abolishes the inhibitory action of Tn on actin filaments. This chain is Troponin C, body wall muscle, found in Halocynthia roretzi (Sea squirt).